Consider the following 335-residue polypeptide: MAFQDPTYDQNKSRHINNSHLQGPNQETIEMKSKHVSFKPSRDFHTNDYSNNYIHGKSLPQQHVTNIENRVDGYPKLQKLFQAKAKQINQFATTPFGCKIGIDSIVPTLNHWIQNENLTFDVVMIGCLTENQFIYPILTQLPLDRLISKPGFLFIWANSQKINELTKLLNNEIWAKKFRRSEELVFVPIDKKSPFYPGLDQDDETLMEKMQWHCWMCITGTVRRSTDGHLIHCNVDTDLSIETKDTTNGAVPSHLYRIAENFSTATRRLHIIPARTGYETPVKVRPGWVIVSPDVMLDNFSPKRYKEEIANLGSNIPLKNEIELLRPRSPVQKAQ.

The interval 1-25 (MAFQDPTYDQNKSRHINNSHLQGPN) is disordered. Residues 16 to 25 (INNSHLQGPN) are compositionally biased toward polar residues.

Belongs to the MT-A70-like family. Component of the MIS (mRNA N6-methyladenosine (m6A) methylation) complex, at least composed of IME4, KAR4, MUM2, SLZ1, and VIR1. Interacts with VIR1.

The protein localises to the nucleus. It localises to the cytoplasm. Component of the MIS complex, a complex that mediates N6-methyladenosine (m6A) methylation of meiotic mRNAs and is required for initiation of meiosis, progression through the meiotic divisions and sporulation. May assist STE12 in the pheromone-dependent expression of KAR3 and CIK1. The sequence is that of Karyogamy protein KAR4 (KAR4) from Saccharomyces cerevisiae (strain ATCC 204508 / S288c) (Baker's yeast).